Here is a 418-residue protein sequence, read N- to C-terminus: Serine/threonine-protein kinase PCRK1 (418 aa).

The tract at residues 36–63 is disordered; it reads GSEFNSRDVSGTSTESSMGRKNSYPPVS. One can recognise a Protein kinase domain in the interval 84 to 369; it reads FSRSVMIGEG…EVLEMVNKIV (286 aa). ATP-binding positions include 90-98 and Lys-118; that span reads IGEGGFGCV. The active-site Proton acceptor is Asp-218. Ser-373, Ser-377, and Ser-385 each carry phosphoserine.

Belongs to the protein kinase superfamily. Ser/Thr protein kinase family. In terms of assembly, interacts with FLS2.

It is found in the cell membrane. It carries out the reaction L-seryl-[protein] + ATP = O-phospho-L-seryl-[protein] + ADP + H(+). The enzyme catalyses L-threonyl-[protein] + ATP = O-phospho-L-threonyl-[protein] + ADP + H(+). Functionally, involved in the activation of early immune responses. Plays a role in pattern-triggered immunity (PTI) induced by pathogen-associated molecular patterns (PAMPs) and damage-associated molecular patterns (DAMPs). Contributes to PTI in response to the bacterial pathogen Pseudomonas syringae pv maculicola strain ES4326. Contributes to PTI in response to the bacterial pathogen Pseudomonas syringae pv tomato strain DC3000. Functions redundantly with PCRK2 in basal resistance against bacterial pathogens and in regulation of plant immunity. Functions together with PCRK2 downstream of the PAMP receptor FLS2. Contributes to the induction of SARD1 and CBP60G, which are transcriptional activator of ICS1, an enzyme involved in salicylate (SA) biosynthesis upon pathogen attack. The chain is Serine/threonine-protein kinase PCRK1 from Arabidopsis thaliana (Mouse-ear cress).